Reading from the N-terminus, the 448-residue chain is tRNA-2-methylthio-N(6)-dimethylallyladenosine synthase (448 aa).

One can recognise an MTTase N-terminal domain in the interval 3–118; that stretch reads KKVFIKTFGC…LPELLNARAA (116 aa). [4Fe-4S] cluster-binding residues include Cys12, Cys49, Cys81, Cys155, Cys159, and Cys162. The Radical SAM core domain maps to 141–374; it reads RVEGASAFVS…QAVINRNILE (234 aa). The region spanning 377-440 is the TRAM domain; it reads QERVGTVQRL…TYTLRGEVVM (64 aa).

The protein belongs to the methylthiotransferase family. MiaB subfamily. As to quaternary structure, monomer. Requires [4Fe-4S] cluster as cofactor.

The protein localises to the cytoplasm. It carries out the reaction N(6)-dimethylallyladenosine(37) in tRNA + (sulfur carrier)-SH + AH2 + 2 S-adenosyl-L-methionine = 2-methylsulfanyl-N(6)-dimethylallyladenosine(37) in tRNA + (sulfur carrier)-H + 5'-deoxyadenosine + L-methionine + A + S-adenosyl-L-homocysteine + 2 H(+). Functionally, catalyzes the methylthiolation of N6-(dimethylallyl)adenosine (i(6)A), leading to the formation of 2-methylthio-N6-(dimethylallyl)adenosine (ms(2)i(6)A) at position 37 in tRNAs that read codons beginning with uridine. This Acidovorax sp. (strain JS42) protein is tRNA-2-methylthio-N(6)-dimethylallyladenosine synthase.